The following is a 332-amino-acid chain: 2,3-diketo-L-gulonate reductase (332 aa).

Catalysis depends on His44, which acts as the Proton donor. NAD(+) is bound by residues 168–174, 224–225, and 304–306; these read ITMVDMS, WK, and GHE.

The protein belongs to the LDH2/MDH2 oxidoreductase family. DlgD subfamily. As to quaternary structure, homodimer.

Its subcellular location is the cytoplasm. The catalysed reaction is 3-dehydro-L-gulonate + NAD(+) = 2,3-dioxo-L-gulonate + NADH + H(+). It carries out the reaction 3-dehydro-L-gulonate + NADP(+) = 2,3-dioxo-L-gulonate + NADPH + H(+). Catalyzes the reduction of 2,3-diketo-L-gulonate in the presence of NADH, to form 3-keto-L-gulonate. This is 2,3-diketo-L-gulonate reductase from Mannheimia succiniciproducens (strain KCTC 0769BP / MBEL55E).